A 293-amino-acid polypeptide reads, in one-letter code: Nucleotide-binding protein BcerKBAB4_4948 (293 aa).

14–21 (GMSGAGKT) contacts ATP. 65 to 68 (DLRG) contributes to the GTP binding site.

This sequence belongs to the RapZ-like family.

Functionally, displays ATPase and GTPase activities. In Bacillus mycoides (strain KBAB4) (Bacillus weihenstephanensis), this protein is Nucleotide-binding protein BcerKBAB4_4948.